We begin with the raw amino-acid sequence, 432 residues long: Glutamate-1-semialdehyde 2,1-aminomutase (432 aa).

N6-(pyridoxal phosphate)lysine is present on K266.

It belongs to the class-III pyridoxal-phosphate-dependent aminotransferase family. HemL subfamily. As to quaternary structure, homodimer. The cofactor is pyridoxal 5'-phosphate.

The protein localises to the cytoplasm. The enzyme catalyses (S)-4-amino-5-oxopentanoate = 5-aminolevulinate. Its pathway is porphyrin-containing compound metabolism; protoporphyrin-IX biosynthesis; 5-aminolevulinate from L-glutamyl-tRNA(Glu): step 2/2. This chain is Glutamate-1-semialdehyde 2,1-aminomutase, found in Janthinobacterium sp. (strain Marseille) (Minibacterium massiliensis).